We begin with the raw amino-acid sequence, 243 residues long: 2-C-methyl-D-erythritol 4-phosphate cytidylyltransferase (243 aa).

The protein belongs to the IspD/TarI cytidylyltransferase family. IspD subfamily.

It carries out the reaction 2-C-methyl-D-erythritol 4-phosphate + CTP + H(+) = 4-CDP-2-C-methyl-D-erythritol + diphosphate. The protein operates within isoprenoid biosynthesis; isopentenyl diphosphate biosynthesis via DXP pathway; isopentenyl diphosphate from 1-deoxy-D-xylulose 5-phosphate: step 2/6. Catalyzes the formation of 4-diphosphocytidyl-2-C-methyl-D-erythritol from CTP and 2-C-methyl-D-erythritol 4-phosphate (MEP). The sequence is that of 2-C-methyl-D-erythritol 4-phosphate cytidylyltransferase from Chlorobium phaeovibrioides (strain DSM 265 / 1930) (Prosthecochloris vibrioformis (strain DSM 265)).